The primary structure comprises 299 residues: Nucleoporin POM34 (299 aa).

The tract at residues 1–39 (MKIQAGQLGLDDNDVPGPLPDTDSKPSSQSQNDTPMFKL) is disordered. The span at 25–34 (KPSSQSQNDT) shows a compositional bias: polar residues. 2 helical membrane passes run 64–84 (IMTNVIAFAFWNLLVKFIKFF) and 133–153 (LFHLLISLNILFSLWKLLSTV). Phosphoserine is present on Ser-270. Residue Thr-273 is modified to Phosphothreonine. Phosphoserine occurs at positions 292 and 294.

Component of the nuclear pore complex (NPC). NPC constitutes the exclusive means of nucleocytoplasmic transport. NPCs allow the passive diffusion of ions and small molecules and the active, nuclear transport receptor-mediated bidirectional transport of macromolecules such as proteins, RNAs, ribonucleoparticles (RNPs), and ribosomal subunits across the nuclear envelope. Due to its 8-fold rotational symmetry, all subunits are present with 8 copies or multiples thereof.

The protein resides in the nucleus. It localises to the nuclear pore complex. Its subcellular location is the nucleus membrane. Functionally, functions as a component of the nuclear pore complex (NPC). NPC components, collectively referred to as nucleoporins (NUPs), can play the role of both NPC structural components and of docking or interaction partners for transiently associated nuclear transport factors. This is Nucleoporin POM34 (POM34) from Saccharomyces cerevisiae (strain ATCC 204508 / S288c) (Baker's yeast).